A 325-amino-acid polypeptide reads, in one-letter code: MAEGLVLRGTMRAHTDVVTAIATPIDNSDMIVTASRDKSIILWHLTKEDKTYGVPRRRLTGHSHFVQDVVLSSDGQFALSGSWDGELRLWDLNAGTSARRFVGHTKDVLSVAFSIDNRQIVSASRDRTIKLWNTLGECKYTIQDGDAHSDWVSCVRFSPSTPQPTIVSASWDRTVKVWNLTNCKLRNTLAGHSGYVNTVAVSPDGSLCASGGKDGVILLWDLAEGKRLYSLDAGSIIHALCFSPNRYWLCAATESSIKIWDLESKSIVEDLKVDLKTEADAAIGGDTTTKKKVIYCTSLNWSADGSTLFSGYTDGVVRVWGIGRY.

7 WD repeats span residues 13 to 44 (AHTD…ILWH), 61 to 91 (GHSH…RLWD), 103 to 133 (GHTK…KLWN), 147 to 179 (AHSD…KVWN), 191 to 221 (GHSG…LLWD), 232 to 261 (DAGS…KIWD), and 291 to 321 (KKVI…RVWG).

The protein belongs to the WD repeat G protein beta family. Ribosomal protein RACK1 subfamily.

Plays a role in hormone-mediated cell division. The chain is Small ribosomal subunit protein RACK1 (GB1) from Medicago sativa (Alfalfa).